Here is a 250-residue protein sequence, read N- to C-terminus: 23S rRNA (guanosine-2'-O-)-methyltransferase RlmB (250 aa).

Positions 198, 218, and 227 each coordinate S-adenosyl-L-methionine.

This sequence belongs to the class IV-like SAM-binding methyltransferase superfamily. RNA methyltransferase TrmH family. RlmB subfamily.

Its subcellular location is the cytoplasm. The catalysed reaction is guanosine(2251) in 23S rRNA + S-adenosyl-L-methionine = 2'-O-methylguanosine(2251) in 23S rRNA + S-adenosyl-L-homocysteine + H(+). In terms of biological role, specifically methylates the ribose of guanosine 2251 in 23S rRNA. This chain is 23S rRNA (guanosine-2'-O-)-methyltransferase RlmB, found in Coxiella burnetii (strain RSA 493 / Nine Mile phase I).